The chain runs to 207 residues: Large ribosomal subunit protein bL25 (207 aa).

Residues 171-207 (ESVVTVEVPEDATESTTAPEAAAAPADAAAAPAADAK) are disordered. Residues 184–207 (ESTTAPEAAAAPADAAAAPAADAK) are compositionally biased toward low complexity.

The protein belongs to the bacterial ribosomal protein bL25 family. CTC subfamily. In terms of assembly, part of the 50S ribosomal subunit; part of the 5S rRNA/L5/L18/L25 subcomplex. Contacts the 5S rRNA. Binds to the 5S rRNA independently of L5 and L18.

This is one of the proteins that binds to the 5S RNA in the ribosome where it forms part of the central protuberance. In Bifidobacterium longum subsp. infantis (strain ATCC 15697 / DSM 20088 / JCM 1222 / NCTC 11817 / S12), this protein is Large ribosomal subunit protein bL25.